The chain runs to 274 residues: 4-hydroxy-3-methylbut-2-enyl diphosphate reductase (274 aa).

Cysteine 12 provides a ligand contact to [4Fe-4S] cluster. 2 residues coordinate (2E)-4-hydroxy-3-methylbut-2-enyl diphosphate: histidine 36 and histidine 70. Residues histidine 36 and histidine 70 each coordinate dimethylallyl diphosphate. Residues histidine 36 and histidine 70 each coordinate isopentenyl diphosphate. Cysteine 92 contributes to the [4Fe-4S] cluster binding site. Residue histidine 120 coordinates (2E)-4-hydroxy-3-methylbut-2-enyl diphosphate. Residue histidine 120 coordinates dimethylallyl diphosphate. Histidine 120 is a binding site for isopentenyl diphosphate. Residue glutamate 122 is the Proton donor of the active site. A (2E)-4-hydroxy-3-methylbut-2-enyl diphosphate-binding site is contributed by threonine 158. Residue cysteine 186 participates in [4Fe-4S] cluster binding. (2E)-4-hydroxy-3-methylbut-2-enyl diphosphate is bound by residues serine 214, serine 215, asparagine 216, and serine 258. Dimethylallyl diphosphate is bound by residues serine 214, serine 215, asparagine 216, and serine 258. Isopentenyl diphosphate contacts are provided by serine 214, serine 215, asparagine 216, and serine 258.

It belongs to the IspH family. [4Fe-4S] cluster is required as a cofactor.

It carries out the reaction isopentenyl diphosphate + 2 oxidized [2Fe-2S]-[ferredoxin] + H2O = (2E)-4-hydroxy-3-methylbut-2-enyl diphosphate + 2 reduced [2Fe-2S]-[ferredoxin] + 2 H(+). It catalyses the reaction dimethylallyl diphosphate + 2 oxidized [2Fe-2S]-[ferredoxin] + H2O = (2E)-4-hydroxy-3-methylbut-2-enyl diphosphate + 2 reduced [2Fe-2S]-[ferredoxin] + 2 H(+). It participates in isoprenoid biosynthesis; dimethylallyl diphosphate biosynthesis; dimethylallyl diphosphate from (2E)-4-hydroxy-3-methylbutenyl diphosphate: step 1/1. Its pathway is isoprenoid biosynthesis; isopentenyl diphosphate biosynthesis via DXP pathway; isopentenyl diphosphate from 1-deoxy-D-xylulose 5-phosphate: step 6/6. Functionally, catalyzes the conversion of 1-hydroxy-2-methyl-2-(E)-butenyl 4-diphosphate (HMBPP) into a mixture of isopentenyl diphosphate (IPP) and dimethylallyl diphosphate (DMAPP). Acts in the terminal step of the DOXP/MEP pathway for isoprenoid precursor biosynthesis. This chain is 4-hydroxy-3-methylbut-2-enyl diphosphate reductase, found in Campylobacter curvus (strain 525.92).